We begin with the raw amino-acid sequence, 1984 residues long: Spermatogenesis-associated protein 31H1 (1984 aa).

5 disordered regions span residues 448-467 (MGLT…TPGP), 1045-1067 (PMEE…QHSL), 1181-1287 (YRER…SDSK), 1326-1346 (RIGA…KPSQ), and 1439-1984 (QQPR…EATR). Polar residues-rich tracts occupy residues 450 to 463 (LTKS…SPGT), 1058 to 1067 (TRISESQHSL), and 1205 to 1226 (TQAS…QSPA). Over residues 1238-1247 (SRPDLVEKTK) the composition is skewed to basic and acidic residues. Composition is skewed to polar residues over residues 1458–1471 (TDSQ…TASV) and 1492–1508 (RNET…TPGT). 2 stretches are compositionally biased toward basic and acidic residues: residues 1532-1558 (DKLT…ERTR) and 1568-1579 (SPSERSQRSSLE). Repeat copies occupy residues 1593–1600 (PSRKNHSS), 1601–1608 (PSERSWRS), and 1609–1616 (PSQRNHCS). Positions 1593–1935 (PSRKNHSSPS…CSPSERSRRS (343 aa)) are 27 X 8 AA approximate tandem repeat of P-S-E-R-S-H-H-S. Low complexity predominate over residues 1599-1610 (SSPSERSWRSPS). Positions 1620 to 1630 (RSCHSLSERGL) are enriched in basic and acidic residues. Positions 1636 to 1647 (RSHRGPSQRRHH) are enriched in basic residues. 3 consecutive repeat copies span residues 1641–1648 (PSQRRHHS), 1649–1656 (PSERSHRS), and 1657–1664 (PSERSHRS). Residues 1648–1667 (SPSERSHRSPSERSHRSSSE) are compositionally biased toward basic and acidic residues. Over residues 1668–1679 (RRHRSPSQRSHR) the composition is skewed to basic residues. The span at 1680–1691 (GPSERSHCSPSE) shows a compositional bias: basic and acidic residues. 19 tandem repeats follow at residues 1681–1688 (PSERSHCS), 1689–1696 (PSERRHRS), 1697–1704 (PSQRSHRG), 1705–1712 (PSERRHHS), 1713–1720 (PSKRSHRS), 1721–1728 (PARRSHRS), 1729–1736 (PSERSHHS), 1737–1744 (PSERSHHS), 1745–1752 (PSERRHHS), 1753–1760 (PSERSHCS), 1761–1768 (PSERSHCS), 1769–1776 (PSERRHRS), 1777–1784 (PSERRHHS), 1785–1792 (PSEKSHHS), 1793–1800 (PSERSHHS), 1801–1808 (PSERRRHS), 1848–1855 (PSEKSHLS), 1864–1871 (PSERRGHS), and 1880–1887 (PSERSHRS). A compositionally biased stretch (basic residues) spans 1692 to 1727 (RRHRSPSQRSHRGPSERRHHSPSKRSHRSPARRSHR). The segment covering 1728-1869 (SPSERSHHSP…SRCSPSERRG (142 aa)) has biased composition (basic and acidic residues). Basic and acidic residues-rich tracts occupy residues 1895 to 1917 (RTSE…EMRP), 1928 to 1941 (PSER…KEGL), and 1949 to 1959 (RPSHSLSRDFK). Repeat copies occupy residues 1921–1928 (SGRNHCSP) and 1929–1935 (SERSRRS). A compositionally biased stretch (polar residues) spans 1960–1969 (NQTTLLGTTH).

As to expression, expressed in sperm (at protein level).

The sequence is that of Spermatogenesis-associated protein 31H1 from Homo sapiens (Human).